Here is a 556-residue protein sequence, read N- to C-terminus: Arginine--tRNA ligase (556 aa).

The 'HIGH' region motif lies at 132-142 (VNPTGDLHLGH).

The protein belongs to the class-I aminoacyl-tRNA synthetase family. Monomer.

The protein localises to the cytoplasm. The catalysed reaction is tRNA(Arg) + L-arginine + ATP = L-arginyl-tRNA(Arg) + AMP + diphosphate. The protein is Arginine--tRNA ligase of Oceanobacillus iheyensis (strain DSM 14371 / CIP 107618 / JCM 11309 / KCTC 3954 / HTE831).